A 796-amino-acid chain; its full sequence is Protein SEY1 homolog (796 aa).

Residues 1–701 (MESSNDFSNK…AGTSISSWRN (701 aa)) lie on the Cytoplasmic side of the membrane. Positions 46–280 (GFRFNVVTIL…VPSDGFFVYS (235 aa)) constitute a GB1/RHD3-type G domain. 56–63 (GSQSSGKS) contributes to the GTP binding site. A coiled-coil region spans residues 554–626 (SLVLLLKAAR…DALTLLKVLK (73 aa)). The helical transmembrane segment at 702 to 722 (IPPIFWLVLLVLGWNELRSVF) threads the bilayer. Topologically, residues 723-725 (KVL) are lumenal. A helical transmembrane segment spans residues 726–746 (LRFYVVIPLLIVFYFTFSYSA). Residues 747–796 (TKLLGPKADQYVKPVRDKVLSLFTALLAWFVRTLHMIASKSSSFKQRPAT) lie on the Cytoplasmic side of the membrane.

This sequence belongs to the TRAFAC class dynamin-like GTPase superfamily. GB1/RHD3 GTPase family. RHD3 subfamily.

The protein resides in the endoplasmic reticulum membrane. Functionally, probable GTP-binding protein that may be involved in cell development. The polypeptide is Protein SEY1 homolog (Theileria parva (East coast fever infection agent)).